The following is a 372-amino-acid chain: Putative glutamate--cysteine ligase 2 (372 aa).

The protein belongs to the glutamate--cysteine ligase type 2 family. YbdK subfamily. In terms of assembly, homodimer.

The enzyme catalyses L-cysteine + L-glutamate + ATP = gamma-L-glutamyl-L-cysteine + ADP + phosphate + H(+). In terms of biological role, ATP-dependent carboxylate-amine ligase which exhibits weak glutamate--cysteine ligase activity. This Salmonella typhimurium (strain LT2 / SGSC1412 / ATCC 700720) protein is Putative glutamate--cysteine ligase 2 (ybdK).